The sequence spans 95 residues: NELL2-interacting cell ontogeny regulator 1 (95 aa).

An N-terminal signal peptide occupies residues 1 to 34 (MAPPPACRSPMSPPPPPLLLLLLSLALLGARARA).

This sequence belongs to the NICOL family. In terms of assembly, interacts with NELL2; triggers epididymal differentiation. Interacts with cell surface receptor TFRC; the interaction mediates uptake of NICOL1 into fibroblasts. In terms of tissue distribution, detected in the brain (at protein level). Also expressed at low levels in the kidney, primarily in tubular epithelial cells.

It is found in the secreted. It localises to the cytoplasm. Its subcellular location is the perinuclear region. MRNA-binding protein which interacts with a range of target mRNAs including SERPINE1, ACTA2, CCN2 and COL4A1 and may promote extracellular matrix production. Binds to the 3'-UTR of SERPINE1 mRNA and stabilizes the mRNA, possibly by competing for binding with SERBP1 and preventing SERBP1-mediated mRNA degradation. Also binds to the 3'-UTR of ACTA2. Testis-derived lumicrine factor that triggers epididymal differentiation and sperm maturation. The protein is NELL2-interacting cell ontogeny regulator 1 of Homo sapiens (Human).